Reading from the N-terminus, the 301-residue chain is MTSRYERQEKIGEGTYGVVYKARDTSTAATVALKRIRLDSEEEGVPCTAIREISLLKELRHENIVKLLDVCHSEHRLTIVFEYLDLDLKKYLDRENGNLDAATIQHFMRDLLRGVAFCHQRSVLHRDLKPQNLLISREKELKLGDFGLGRSFAIPVRKFTNEVVTLWYRPPDVLLGSMQYGPPVDVWSVGCIFSEMATGTPLFAGKNDADQLMRIFRFLGTPNNRVWPSMNQYPNSNNMLSQPEFLQNFEPEWSNVLGSVPGYEKLGCAGVDLLERLLRYEPSERITAADALNHPYFSLQF.

The Protein kinase domain occupies 5-297; that stretch reads YERQEKIGEG…AADALNHPYF (293 aa). ATP-binding positions include 11–19 and K34; that span reads IGEGTYGVV. Residue D127 is the Proton acceptor of the active site. Position 160 is a phosphothreonine; by CAK (T160).

The protein belongs to the protein kinase superfamily. CMGC Ser/Thr protein kinase family. CDC2/CDKX subfamily. Forms a stable but non-covalent complex with a regulatory subunit and with a cyclin.

The enzyme catalyses [DNA-directed RNA polymerase] + ATP = phospho-[DNA-directed RNA polymerase] + ADP + H(+). Its activity is regulated as follows. Phosphorylation at Thr-15 or Tyr-16 inactivates the enzyme, while phosphorylation at Thr-160 activates it. Functionally, may be involved in some stage-specific role in the promastigote cell cycle. The sequence is that of Cell division protein kinase 2 homolog CRK1 (CRK1) from Leishmania mexicana.